We begin with the raw amino-acid sequence, 139 residues long: Natriuretic peptide Mc-NP (139 aa).

The signal sequence occupies residues 1-25; sequence MVGLSRLRGGGLLLVLALLPLALDG. The propeptide occupies 26 to 75; it reads KPLEEAPTAPSRIIPFSRPVRKQSQAVLDPMVHPERPAGSGDDGDSRRLE. The disordered stretch occupies residues 45–72; that stretch reads VRKQSQAVLDPMVHPERPAGSGDDGDSR. A disulfide bond links cysteine 86 and cysteine 102. Positions 117-139 are excised as a propeptide; the sequence is IIPFSRPVRKESRAALDRMQQPG.

It belongs to the natriuretic peptide family. Expressed by the venom gland.

Its subcellular location is the secreted. In terms of biological role, snake venom natriuretic peptide that dose-dependently induces the rapid relaxation of rat aortic strips phenylephrine-precontracted. Acts by stimulating cGMP production in a dose-dependent manner (by probably activating NPR1 and/or NPR2). May also show potent hypotensive effects. A synthetic peptide (AA 77-108, where the Cys-95 is replaced by a Ser) increases sodium excretion and urinary volume in rat kidneys. This chain is Natriuretic peptide Mc-NP, found in Micrurus corallinus (Brazilian coral snake).